The following is a 496-amino-acid chain: Probable uroporphyrinogen-III C-methyltransferase (496 aa).

This sequence belongs to the precorrin methyltransferase family.

The enzyme catalyses uroporphyrinogen III + 2 S-adenosyl-L-methionine = precorrin-2 + 2 S-adenosyl-L-homocysteine + H(+). Its function is as follows. Siroheme synthase involved in methionine biosynthesis. The polypeptide is Probable uroporphyrinogen-III C-methyltransferase (Schizosaccharomyces pombe (strain 972 / ATCC 24843) (Fission yeast)).